A 252-amino-acid chain; its full sequence is uncharacterized protein (252 aa).

Phosphoserine is present on residues Ser-195 and Ser-209.

In terms of tissue distribution, testis-specific. Highly expressed in spermatocytes (at protein level).

Its function is as follows. Essential for normal spermatogenesis and male fertility. This is an uncharacterized protein from Mus musculus (Mouse).